Consider the following 369-residue polypeptide: UDP-N-acetylglucosamine--N-acetylmuramyl-(pentapeptide) pyrophosphoryl-undecaprenol N-acetylglucosamine transferase (369 aa).

UDP-N-acetyl-alpha-D-glucosamine is bound by residues 16-18, Asn130, Arg171, Ser203, Ile253, and Gln298; that span reads TGG.

Belongs to the glycosyltransferase 28 family. MurG subfamily.

Its subcellular location is the cell inner membrane. It catalyses the reaction di-trans,octa-cis-undecaprenyl diphospho-N-acetyl-alpha-D-muramoyl-L-alanyl-D-glutamyl-meso-2,6-diaminopimeloyl-D-alanyl-D-alanine + UDP-N-acetyl-alpha-D-glucosamine = di-trans,octa-cis-undecaprenyl diphospho-[N-acetyl-alpha-D-glucosaminyl-(1-&gt;4)]-N-acetyl-alpha-D-muramoyl-L-alanyl-D-glutamyl-meso-2,6-diaminopimeloyl-D-alanyl-D-alanine + UDP + H(+). It participates in cell wall biogenesis; peptidoglycan biosynthesis. Functionally, cell wall formation. Catalyzes the transfer of a GlcNAc subunit on undecaprenyl-pyrophosphoryl-MurNAc-pentapeptide (lipid intermediate I) to form undecaprenyl-pyrophosphoryl-MurNAc-(pentapeptide)GlcNAc (lipid intermediate II). The polypeptide is UDP-N-acetylglucosamine--N-acetylmuramyl-(pentapeptide) pyrophosphoryl-undecaprenol N-acetylglucosamine transferase (Cytophaga hutchinsonii (strain ATCC 33406 / DSM 1761 / CIP 103989 / NBRC 15051 / NCIMB 9469 / D465)).